The sequence spans 459 residues: tRNA-guanine(15) transglycosylase (459 aa).

Asp-90 (nucleophile) is an active-site residue. Asp-125 and Gly-192 together coordinate substrate. Residues Cys-275, Cys-277, and Cys-280 each contribute to the Zn(2+) site.

It belongs to the archaeosine tRNA-ribosyltransferase family. Zn(2+) is required as a cofactor.

It carries out the reaction guanosine(15) in tRNA + 7-cyano-7-deazaguanine = 7-cyano-7-carbaguanosine(15) in tRNA + guanine. It functions in the pathway tRNA modification; archaeosine-tRNA biosynthesis. Exchanges the guanine residue with 7-cyano-7-deazaguanine (preQ0) at position 15 in the dihydrouridine loop (D-loop) of archaeal tRNAs. In Methanopyrus kandleri (strain AV19 / DSM 6324 / JCM 9639 / NBRC 100938), this protein is tRNA-guanine(15) transglycosylase.